Consider the following 494-residue polypeptide: Poly(3-hydroxybutyrate) depolymerase (494 aa).

Residues 1 to 25 (MAFNFIRAAAAGAAMALCGVGSVHA) form the signal peptide. Serine 45 serves as the catalytic Nucleophile. Catalysis depends on charge relay system residues aspartate 132 and histidine 166. Positions 347 to 431 (APTGVSTSGA…AAASGTTLAA (85 aa)) constitute a Fibronectin type-III domain.

It belongs to the AB hydrolase superfamily. Lipase family.

The protein resides in the secreted. It carries out the reaction [(3R)-hydroxybutanoate](n) + H2O = [(3R)-hydroxybutanoate](n-2) + (3R)-hydroxybutanoate dimer + H(+). The enzyme catalyses [(3R)-hydroxybutanoate](n) + H2O = [(3R)-hydroxybutanoate](n-1) + (R)-3-hydroxybutanoate + H(+). The catalysed reaction is (3R)-hydroxybutanoate dimer + H2O = 2 (R)-3-hydroxybutanoate + H(+). Catalyzes the hydrolysis of poly(3-hydroxybutyrate) (PHB) film, producing the monomer and dimer of 3-hydroxybutyrate (3HB), while the 3HB trimer and tetramer are not formed. The polypeptide is Poly(3-hydroxybutyrate) depolymerase (Delftia acidovorans (Pseudomonas acidovorans)).